A 538-amino-acid chain; its full sequence is Bifunctional purine biosynthesis protein PurH (538 aa).

The 151-residue stretch at 8–158 (IPAPDKVEIK…KNHAYVTILT (151 aa)) folds into the MGS-like domain.

This sequence belongs to the PurH family.

It carries out the reaction (6R)-10-formyltetrahydrofolate + 5-amino-1-(5-phospho-beta-D-ribosyl)imidazole-4-carboxamide = 5-formamido-1-(5-phospho-D-ribosyl)imidazole-4-carboxamide + (6S)-5,6,7,8-tetrahydrofolate. The catalysed reaction is IMP + H2O = 5-formamido-1-(5-phospho-D-ribosyl)imidazole-4-carboxamide. The protein operates within purine metabolism; IMP biosynthesis via de novo pathway; 5-formamido-1-(5-phospho-D-ribosyl)imidazole-4-carboxamide from 5-amino-1-(5-phospho-D-ribosyl)imidazole-4-carboxamide (10-formyl THF route): step 1/1. It functions in the pathway purine metabolism; IMP biosynthesis via de novo pathway; IMP from 5-formamido-1-(5-phospho-D-ribosyl)imidazole-4-carboxamide: step 1/1. The chain is Bifunctional purine biosynthesis protein PurH from Rhizobium leguminosarum bv. trifolii (strain WSM2304).